Consider the following 615-residue polypeptide: 3-(3-hydroxy-phenyl)propionate/3-hydroxycinnamic acid hydroxylase 1 (615 aa).

Residues 1 to 20 (MRPAFEPAAGLGRAHPHETT) form a disordered region. FAD is bound by residues 27 to 56 (DVAI…VVEK) and 294 to 304 (FRVKRILLAGD).

The protein belongs to the PheA/TfdB FAD monooxygenase family. FAD is required as a cofactor.

The catalysed reaction is 3-(3-hydroxyphenyl)propanoate + NADH + O2 + H(+) = 3-(2,3-dihydroxyphenyl)propanoate + NAD(+) + H2O. It carries out the reaction (2E)-3-(3-hydroxyphenyl)prop-2-enoate + NADH + O2 + H(+) = (2E)-3-(2,3-dihydroxyphenyl)prop-2-enoate + NAD(+) + H2O. It functions in the pathway aromatic compound metabolism; 3-phenylpropanoate degradation. Functionally, catalyzes the insertion of one atom of molecular oxygen into position 2 of the phenyl ring of 3-(3-hydroxyphenyl)propionate (3-HPP) and hydroxycinnamic acid (3HCI). This Burkholderia vietnamiensis (strain G4 / LMG 22486) (Burkholderia cepacia (strain R1808)) protein is 3-(3-hydroxy-phenyl)propionate/3-hydroxycinnamic acid hydroxylase 1.